Here is a 546-residue protein sequence, read N- to C-terminus: Chaperonin GroEL 3 (546 aa).

Residues 30–33 (TLGP), K51, 87–91 (DGTTT), G415, and D496 each bind ATP.

The protein belongs to the chaperonin (HSP60) family. Forms a cylinder of 14 subunits composed of two heptameric rings stacked back-to-back. Interacts with the co-chaperonin GroES.

The protein resides in the cytoplasm. It carries out the reaction ATP + H2O + a folded polypeptide = ADP + phosphate + an unfolded polypeptide.. Its function is as follows. Together with its co-chaperonin GroES, plays an essential role in assisting protein folding. The GroEL-GroES system forms a nano-cage that allows encapsulation of the non-native substrate proteins and provides a physical environment optimized to promote and accelerate protein folding. In Bradyrhizobium diazoefficiens (strain JCM 10833 / BCRC 13528 / IAM 13628 / NBRC 14792 / USDA 110), this protein is Chaperonin GroEL 3.